We begin with the raw amino-acid sequence, 256 residues long: MKHSNKPYDSFQDELEDYIKVQKARGLEPKTCFRRMRGEYLESCGYREEFDSRPRYRMFDQRIPSGTNHSYPRSCSSSQTEDRVPQWLPAHDKIRLNSLNYCQFTRDGFSEKPVSLNLSQQEYNCGSYSVESVVHKDLCSGHSTIDPQVSHRQMYQKRKRHLEEGRERQEERPKHERKRSSEEMDLNKHKSIQRKKTKAETETVQDGTEKLKNRKEKKNRDVSSKKEDRKRRKEKKEQGEERTEEEMLWDQSILGF.

Disordered stretches follow at residues 61 to 83 (QRIP…TEDR) and 141 to 256 (GHST…ILGF). 2 stretches are compositionally biased toward polar residues: residues 64–79 (PSGT…SSSQ) and 141–153 (GHST…SHRQ). Composition is skewed to basic and acidic residues over residues 161–188 (HLEE…DLNK) and 218–227 (KNRDVSSKKE). A coiled-coil region spans residues 208–247 (TEKLKNRKEKKNRDVSSKKEDRKRRKEKKEQGEERTEEEM).

This is Lysine-rich coiled-coil protein 1 (Krcc1) from Rattus norvegicus (Rat).